The following is a 136-amino-acid chain: Piercer of microtubule wall 1 protein (136 aa).

Residues 1–24 (MAEECPRACAEPVAPKATAPPERT) are disordered.

This sequence belongs to the PIERCE1 family. Microtubule inner protein component of sperm flagellar doublet microtubules. Interacts with CFAP53, ODAD1 and ODAD3; the interactions link the outer dynein arms docking complex (ODA-DC) to the internal microtubule inner proteins (MIP) in cilium axoneme. In terms of tissue distribution, expressed in airway epithelial cells.

The protein localises to the cytoplasm. Its subcellular location is the cytoskeleton. It localises to the cilium axoneme. The protein resides in the flagellum axoneme. In terms of biological role, microtubule inner protein involved in the attachment of outer dynein arms (ODAs) to dynein-decorated doublet microtubules (DMTs) in cilia axoneme, which is required for motile cilia beating. Functions at the initial step of left-right asymmetry specification of the visceral organs. This Homo sapiens (Human) protein is Piercer of microtubule wall 1 protein.